Reading from the N-terminus, the 42-residue chain is MSNVGTTGRIPLWFIGVIAGIAALSIVGLFFYGAYSGLGSSL.

The chain crosses the membrane as a helical span at residues 10-30; that stretch reads IPLWFIGVIAGIAALSIVGLF.

It belongs to the PsbJ family. PSII is composed of 1 copy each of membrane proteins PsbA, PsbB, PsbC, PsbD, PsbE, PsbF, PsbH, PsbI, PsbJ, PsbK, PsbL, PsbM, PsbT, PsbX, PsbY, PsbZ, Psb30/Ycf12, at least 3 peripheral proteins of the oxygen-evolving complex and a large number of cofactors. It forms dimeric complexes.

The protein resides in the plastid. The protein localises to the chloroplast thylakoid membrane. Its function is as follows. One of the components of the core complex of photosystem II (PSII). PSII is a light-driven water:plastoquinone oxidoreductase that uses light energy to abstract electrons from H(2)O, generating O(2) and a proton gradient subsequently used for ATP formation. It consists of a core antenna complex that captures photons, and an electron transfer chain that converts photonic excitation into a charge separation. This is Photosystem II reaction center protein J from Zygnema circumcarinatum (Green alga).